A 114-amino-acid chain; its full sequence is UPF0102 protein HPG27_782 (114 aa).

The protein belongs to the UPF0102 family.

The polypeptide is UPF0102 protein HPG27_782 (Helicobacter pylori (strain G27)).